We begin with the raw amino-acid sequence, 74 residues long: MNTHGKLSKRIKQKFIKQLVAPGAQAAIDQMKFEIASEFGVNLGPDTTACANGFFGAEITKCLVQLREKLGSRY.

It belongs to the alpha/beta-type SASP family.

The chain is Protein SspS (sspS) from Streptococcus pyogenes.